Here is a 950-residue protein sequence, read N- to C-terminus: Double-stranded RNA-binding protein Staufen homolog (950 aa).

3 disordered regions span residues 25–168, 202–274, and 288–342; these read VSGA…QQQQ, QQQL…QPST, and VTPV…NTKE. The span at 31 to 43 shows a compositional bias: low complexity; sequence QQRSMMSQQRGGS. Positions 45 to 66 are enriched in polar residues; the sequence is AINSSKSPYQLQTSSISQFSHL. Positions 67-77 are enriched in low complexity; that stretch reads QQQQQQQQQQQ. Residues 78 to 122 are compositionally biased toward polar residues; it reads LVNNYHKQKQMSPDITSHQFSSSTGGGMPTQNGNYQSMSGSSIHT. 3 stretches are compositionally biased toward low complexity: residues 130 to 143, 153 to 168, and 202 to 253; these read QLSL…YSSQ, QQHH…QQQQ, and QQQL…ILQH. Residues 254–274 show a composition bias toward polar residues; sequence SPTSGKSLSSAPHGTSVQPST. Over residues 313–322 the composition is skewed to basic and acidic residues; sequence SGRDSVHVSD. 4 consecutive DRBM domains span residues 344 to 411, 435 to 546, 578 to 645, and 690 to 758; these read TPMC…ETKC, TPTV…ILKN, SEIS…ELRK, and NPIS…LLGY. 2 disordered regions span residues 758-833 and 922-950; these read YTKP…HTAS and DIHP…DFSK. Polar residues predominate over residues 765–782; the sequence is PTKSSFKNPSTGEAGQTN. Over residues 922–937 the composition is skewed to basic and acidic residues; sequence DIHPGGDGPQVKKDVL.

Strongly expressed in nervous tissue (at protein level).

It localises to the perikaryon. It is found in the cell projection. RNA-binding protein which is required for syntaxin location in sensory neurons during long-term synaptic facilitation. Binds to syntaxin mRNA and is required to maintain its accumulation at the axon hillock following neuronal stimulation and at the opposite pole in stable unstimulated sensory neurons. This is Double-stranded RNA-binding protein Staufen homolog from Aplysia californica (California sea hare).